The following is a 175-amino-acid chain: Peptide deformylase (175 aa).

Residues Cys-98 and His-140 each contribute to the Fe cation site. The active site involves Glu-141. His-144 contributes to the Fe cation binding site.

It belongs to the polypeptide deformylase family. Requires Fe(2+) as cofactor.

It catalyses the reaction N-terminal N-formyl-L-methionyl-[peptide] + H2O = N-terminal L-methionyl-[peptide] + formate. In terms of biological role, removes the formyl group from the N-terminal Met of newly synthesized proteins. Requires at least a dipeptide for an efficient rate of reaction. N-terminal L-methionine is a prerequisite for activity but the enzyme has broad specificity at other positions. This Bradyrhizobium sp. (strain ORS 278) protein is Peptide deformylase.